Reading from the N-terminus, the 173-residue chain is ATP synthase subunit delta (173 aa).

This sequence belongs to the ATPase delta chain family. As to quaternary structure, F-type ATPases have 2 components, F(1) - the catalytic core - and F(0) - the membrane proton channel. F(1) has five subunits: alpha(3), beta(3), gamma(1), delta(1), epsilon(1). F(0) has three main subunits: a(1), b(2) and c(10-14). The alpha and beta chains form an alternating ring which encloses part of the gamma chain. F(1) is attached to F(0) by a central stalk formed by the gamma and epsilon chains, while a peripheral stalk is formed by the delta and b chains.

The protein resides in the cell inner membrane. F(1)F(0) ATP synthase produces ATP from ADP in the presence of a proton or sodium gradient. F-type ATPases consist of two structural domains, F(1) containing the extramembraneous catalytic core and F(0) containing the membrane proton channel, linked together by a central stalk and a peripheral stalk. During catalysis, ATP synthesis in the catalytic domain of F(1) is coupled via a rotary mechanism of the central stalk subunits to proton translocation. Its function is as follows. This protein is part of the stalk that links CF(0) to CF(1). It either transmits conformational changes from CF(0) to CF(1) or is implicated in proton conduction. The protein is ATP synthase subunit delta of Campylobacter jejuni subsp. jejuni serotype O:6 (strain 81116 / NCTC 11828).